Consider the following 323-residue polypeptide: MTLRAVVTGVGHYLPDRIVPNSEFEKTLDTNDEWIRARSGIERRHFAAEGETTASMAAAASRAALSMAGAEAQDVDAIIVATSTADLTFPSAATMVQAELGMTRGFAFDVQAVCAGFVFALSNANALILSGQARRVLVIGAEAFSRIMDWTDRSTCVLFGDGAGAVLLEAQDGTGTSADRGILSTDLNSDGRHKDLLYVDGGVSTGTTGYLRMQGNQVFRHAVEKLAATATTALERAGVSASDVDWVVPHQANIRIIQGTAKKLGVSMDRVVVTVQDHGNTSAASIPLALSVGHARGQIKQGDLVVTEAIGGGLAWGAVVLRW.

Active-site residues include Cys114 and His250. The segment at 251-255 (QANIR) is ACP-binding. Asn280 is an active-site residue.

It belongs to the thiolase-like superfamily. FabH family. Homodimer.

The protein localises to the cytoplasm. The enzyme catalyses malonyl-[ACP] + acetyl-CoA + H(+) = 3-oxobutanoyl-[ACP] + CO2 + CoA. The protein operates within lipid metabolism; fatty acid biosynthesis. In terms of biological role, catalyzes the condensation reaction of fatty acid synthesis by the addition to an acyl acceptor of two carbons from malonyl-ACP. Catalyzes the first condensation reaction which initiates fatty acid synthesis and may therefore play a role in governing the total rate of fatty acid production. Possesses both acetoacetyl-ACP synthase and acetyl transacylase activities. Its substrate specificity determines the biosynthesis of branched-chain and/or straight-chain of fatty acids. This is Beta-ketoacyl-[acyl-carrier-protein] synthase III from Roseobacter denitrificans (strain ATCC 33942 / OCh 114) (Erythrobacter sp. (strain OCh 114)).